The chain runs to 239 residues: Short palate, lung and nasal epithelium carcinoma-associated protein 2A (239 aa).

An N-terminal signal peptide occupies residues 1 to 20 (MVQLWKLVLLCGLLAGTSES). Residues cysteine 166 and cysteine 209 are joined by a disulfide bond.

This sequence belongs to the BPI/LBP/Plunc superfamily. Plunc family. Detected in salivary tissues: parotid, submandibular and sublingual glands.

The protein localises to the secreted. The chain is Short palate, lung and nasal epithelium carcinoma-associated protein 2A (SPLUNC2A) from Bos taurus (Bovine).